Reading from the N-terminus, the 876-residue chain is Protein TORMOZ EMBRYO DEFECTIVE (876 aa).

WD repeat units lie at residues 58–97 (GESDTLTALALSPDDKLLFSAGHSRQIRVWDLETLKCIRS), 100–139 (GHEGPVMGMACHASGGLLATAGADRKVLVWDVDGGFCTHY), 142–183 (GHKG…TEKK), 190–229 (KHFSAVTSIALSEDGLTLFSAGRDKVVNLWDLHDYSCKAT), 255–294 (LDQKKSKKKESDSQATYFITVGERGVVRIWKSEGSICLYE), 308–347 (ESKRGFTAAAMLPSDHGLLCVTADQQFFFYSVVENVEETE), 356–396 (GYNE…CSYV), 399–441 (GHKE…CIGV), 444–484 (GHNG…EDSE), 497–536 (AHDKDINSVAVARNDSLVCTGSEDRTASIWRLPDLVHVVT), 539–580 (GHKR…KTFE), 581–620 (GHTSSVLRASFITDGTQFVSCGADGLLKLWNVNTSECIAT), and 623–662 (QHEDKVWALAVGKKTEMIATGGGDAVINLWHDSTASDKED). The tract at residues 816 to 876 (VETEYPKDEK…AEAQGSVIAV (61 aa)) is disordered. Basic and acidic residues predominate over residues 819–831 (EYPKDEKKKEKDV). The short motif at 848–855 (SRKRKSQK) is the Nuclear localization signal element. Basic residues predominate over residues 849–864 (RKRKSQKSKGKSNKKR).

Preferentially expressed in dividing cells in a variety of tissues and meristematic regions.

It localises to the nucleus. The protein resides in the nucleolus. Functionally, essential protein involved in the regulation of cell division planes during embryogenesis which defines cell patterning, especially longitudinal division planes of the proembryo, probably via the regulation of embryo patterning genes expression patterns. In Arabidopsis thaliana (Mouse-ear cress), this protein is Protein TORMOZ EMBRYO DEFECTIVE.